A 294-amino-acid polypeptide reads, in one-letter code: Ribosomal RNA small subunit methyltransferase H (294 aa).

S-adenosyl-L-methionine-binding positions include 37–39 (GGH), Asp58, Leu93, Asp105, and Gln112.

This sequence belongs to the methyltransferase superfamily. RsmH family.

It is found in the cytoplasm. It carries out the reaction cytidine(1402) in 16S rRNA + S-adenosyl-L-methionine = N(4)-methylcytidine(1402) in 16S rRNA + S-adenosyl-L-homocysteine + H(+). In terms of biological role, specifically methylates the N4 position of cytidine in position 1402 (C1402) of 16S rRNA. This chain is Ribosomal RNA small subunit methyltransferase H, found in Fervidobacterium nodosum (strain ATCC 35602 / DSM 5306 / Rt17-B1).